Consider the following 268-residue polypeptide: UPF0328 protein ECU09_2030 (268 aa).

Belongs to the UPF0328 family.

This chain is UPF0328 protein ECU09_2030, found in Encephalitozoon cuniculi (strain GB-M1) (Microsporidian parasite).